A 448-amino-acid chain; its full sequence is 3-phosphoshikimate 1-carboxyvinyltransferase (448 aa).

Positions 38, 39, and 43 each coordinate 3-phosphoshikimate. K38 serves as a coordination point for phosphoenolpyruvate. Phosphoenolpyruvate contacts are provided by G111 and R140. The 3-phosphoshikimate site is built by S185, Q187, D335, and K362. Q187 serves as a coordination point for phosphoenolpyruvate. The Proton acceptor role is filled by D335. The phosphoenolpyruvate site is built by R366 and R408.

This sequence belongs to the EPSP synthase family. Monomer.

The protein localises to the cytoplasm. It catalyses the reaction 3-phosphoshikimate + phosphoenolpyruvate = 5-O-(1-carboxyvinyl)-3-phosphoshikimate + phosphate. It functions in the pathway metabolic intermediate biosynthesis; chorismate biosynthesis; chorismate from D-erythrose 4-phosphate and phosphoenolpyruvate: step 6/7. Catalyzes the transfer of the enolpyruvyl moiety of phosphoenolpyruvate (PEP) to the 5-hydroxyl of shikimate-3-phosphate (S3P) to produce enolpyruvyl shikimate-3-phosphate and inorganic phosphate. In Gloeothece citriformis (strain PCC 7424) (Cyanothece sp. (strain PCC 7424)), this protein is 3-phosphoshikimate 1-carboxyvinyltransferase.